We begin with the raw amino-acid sequence, 158 residues long: uncharacterized protein (158 aa).

The protein belongs to the mimivirus L223/L227/L812 family.

This is an uncharacterized protein from Acanthamoeba polyphaga mimivirus (APMV).